We begin with the raw amino-acid sequence, 436 residues long: UPF0597 protein YhaM (436 aa).

This sequence belongs to the UPF0597 family.

This Shigella boydii serotype 4 (strain Sb227) protein is UPF0597 protein YhaM.